We begin with the raw amino-acid sequence, 473 residues long: MAIFYKPSKGKNKSNVKGRVRGAGSGEKQHIVKTKQSWPSVDDINAANEAVTIDGMDWQGQGVARGDTLYFVDGALPGETVEIKALSSNKQIVNAKVTKVNTPSEHRQKPFCGVANQCGGCQLQHVEPQEALALRDDALKSMFQRKLGFNEGAWQAPVSGNRPRYRRKARLAIDARNPDKIKLGFRENAGKNIVDIEGCPVLVESLSQLIAPLKSAITGYASARLVGHVSLLAGENAVQVTVKHTRSLANDFIASLSQFAVEQNVNMTIEDGNGEFTHLHEIAPITCNTVDGFYLQPGPNDFVQVNAEVNTKMVAQALSWLAPKAGERIADWFSGLGNFTLPIANSGATVSAVEGVAEMVQRAKSNALEQGITNVDWMQLDLADEKSVDKALAGGFDKVLLDPSREGALTVCHALVRATPNTIVYVSCNPNTFSRDARVLIDGGYQMQKAGVVEMFPFTHHMETMALFTRQQQ.

Positions 6 to 27 (KPSKGKNKSNVKGRVRGAGSGE) are disordered. Residues 8-20 (SKGKNKSNVKGRV) show a composition bias toward basic residues. Positions 42 to 99 (DDINAANEAVTIDGMDWQGQGVARGDTLYFVDGALPGETVEIKALSSNKQIVNAKVTK) constitute a TRAM domain. Positions 112, 118, 121, and 199 each coordinate [4Fe-4S] cluster. S-adenosyl-L-methionine is bound by residues Gln304, Phe333, Asn338, Glu354, Asp381, and Asp402. Cys428 acts as the Nucleophile in catalysis.

It belongs to the class I-like SAM-binding methyltransferase superfamily. RNA M5U methyltransferase family. RlmD subfamily.

The enzyme catalyses uridine(1939) in 23S rRNA + S-adenosyl-L-methionine = 5-methyluridine(1939) in 23S rRNA + S-adenosyl-L-homocysteine + H(+). In terms of biological role, catalyzes the formation of 5-methyl-uridine at position 1939 (m5U1939) in 23S rRNA. In Alteromonas naphthalenivorans, this protein is 23S rRNA (uracil(1939)-C(5))-methyltransferase RlmD.